The sequence spans 31 residues: Potassium channel toxin alpha-KTx 5.5 (31 aa).

Disulfide bonds link cysteine 3/cysteine 21, cysteine 8/cysteine 26, and cysteine 12/cysteine 28. The segment at 6-9 is [R/K]XCQ motif; sequence RRCE. A Histidine amide modification is found at histidine 31.

In terms of tissue distribution, expressed by the venom gland.

The protein resides in the secreted. Blocks small conductance calcium-activated potassium channels. This Hottentotta tamulus (Eastern Indian scorpion) protein is Potassium channel toxin alpha-KTx 5.5.